Reading from the N-terminus, the 137-residue chain is Proofreading thioesterase EntH (137 aa).

Residue E63 is the Nucleophile or proton acceptor of the active site.

Belongs to the thioesterase PaaI family. In terms of assembly, homotetramer. Dimer of dimers. Interacts specifically with the aryl carrier protein (ArCP) domain of EntB.

Its subcellular location is the cytoplasm. Its pathway is siderophore biosynthesis; enterobactin biosynthesis. In terms of biological role, required for optimal enterobactin synthesis. Acts as a proofreading enzyme that prevents EntB misacylation by hydrolyzing the thioester bound existing between EntB and wrongly charged molecules. The sequence is that of Proofreading thioesterase EntH from Enterobacter lignolyticus (strain SCF1).